The chain runs to 539 residues: Hydroxylamine reductase (539 aa).

The [4Fe-4S] cluster site is built by cysteine 3, cysteine 6, cysteine 13, and cysteine 19. Hybrid [4Fe-2O-2S] cluster is bound by residues histidine 240, glutamate 264, cysteine 308, cysteine 395, cysteine 423, cysteine 448, glutamate 482, and lysine 484. A Cysteine persulfide modification is found at cysteine 395.

Belongs to the HCP family. [4Fe-4S] cluster serves as cofactor. The cofactor is hybrid [4Fe-2O-2S] cluster.

It localises to the cytoplasm. It carries out the reaction A + NH4(+) + H2O = hydroxylamine + AH2 + H(+). Functionally, catalyzes the reduction of hydroxylamine to form NH(3) and H(2)O. The polypeptide is Hydroxylamine reductase (Thermodesulfovibrio yellowstonii (strain ATCC 51303 / DSM 11347 / YP87)).